The chain runs to 218 residues: Glutathione S-transferase PM239X14 (218 aa).

One can recognise a GST N-terminal domain in the interval 2 to 85; the sequence is VTVKLYGMAY…YLVAKYGKGS (84 aa). Glutathione contacts are provided by residues 12-13, 41-42, 55-56, and 69-70; these read ST, HK, VI, and ES. One can recognise a GST C-terminal domain in the interval 93 to 218; that stretch reads DPKAYGLFEQ…LLRNSSKEFM (126 aa).

The protein belongs to the GST superfamily. Phi family. In terms of tissue distribution, expressed in vegetative rosettes.

The protein localises to the cytoplasm. It is found in the cytosol. The enzyme catalyses RX + glutathione = an S-substituted glutathione + a halide anion + H(+). Functionally, specifically catalyzes the conjugation of synthetic 1-chloro-2,4-ditrobenzene to GSH. Also functions as a glutathione peroxidase, converting linoleate oxidation products into their corresponding hydroxyacids. This enzyme may thus serve to protect the cell from oxygen toxicity as well as from exogenous toxins such as herbicides. In Arabidopsis thaliana (Mouse-ear cress), this protein is Glutathione S-transferase PM239X14.